The primary structure comprises 600 residues: Alpha pinene synthase, chloroplastic (600 aa).

The tract at residues 1–26 (MSSISMHARPLNISAANNHHPSWDRR) is disordered. A chloroplast-targeting transit peptide spans 1-31 (MSSISMHARPLNISAANNHHPSWDRRVSKPR). Positions 354, 358, 498, and 506 each coordinate Mg(2+). The DDXXD motif motif lies at 354–358 (DDVYD).

It belongs to the terpene synthase family. Tpsa subfamily. It depends on Mg(2+) as a cofactor. Mn(2+) serves as cofactor. As to expression, barely detectable in leaves.

The protein localises to the plastid. It is found in the chloroplast. It catalyses the reaction (2E)-geranyl diphosphate = alpha-pinene + diphosphate. The protein operates within secondary metabolite biosynthesis; terpenoid biosynthesis. Functionally, monoterpene synthase involved in the biosynthesis of volatile compounds widely used in aromatherapy and folk medicine, and present in culinary herbs. Mediates the conversion of (2E)-geranyl diphosphate (GPP) into alpha-pinene and, as minor compounds, into alpha-phellandrene, limonene and alpha-terpinolene. This chain is Alpha pinene synthase, chloroplastic, found in Lavandula stoechas (Butterfly lavender).